The sequence spans 179 residues: MARLAELYNKEMVPALMKDQNYKNIMEVPKLVKIVVNMGLGEAIQNVKILDSAAEELAAITGQRPVITKAKKSIAGFKLRQGMPIGCAVTLRREKMYEFLDRLVSVSLPRVRDFKGISGKAFDGKGNYSLGVKEQLIFPEIDYDKVDKIKGLNITIVTTAKTDAEGKALLKLMGLPFRN.

This sequence belongs to the universal ribosomal protein uL5 family. As to quaternary structure, part of the 50S ribosomal subunit; part of the 5S rRNA/L5/L18/L25 subcomplex. Contacts the 5S rRNA and the P site tRNA. Forms a bridge to the 30S subunit in the 70S ribosome.

In terms of biological role, this is one of the proteins that bind and probably mediate the attachment of the 5S RNA into the large ribosomal subunit, where it forms part of the central protuberance. In the 70S ribosome it contacts protein S13 of the 30S subunit (bridge B1b), connecting the 2 subunits; this bridge is implicated in subunit movement. Contacts the P site tRNA; the 5S rRNA and some of its associated proteins might help stabilize positioning of ribosome-bound tRNAs. This is Large ribosomal subunit protein uL5 from Citrifermentans bemidjiense (strain ATCC BAA-1014 / DSM 16622 / JCM 12645 / Bem) (Geobacter bemidjiensis).